The following is a 652-amino-acid chain: Interferon-induced GTP-binding protein Mx1 (652 aa).

The segment at 1–27 (MKERTSACRHGTPQKHPDTSEESQAME) is disordered. The Dynamin-type G domain maps to 58–331 (DLALPAIAVI…LTSHICKSLP (274 aa)). Residues 68–75 (GDQSSGKS) are G1 motif. Position 68 to 75 (68 to 75 (GDQSSGKS)) interacts with GTP. The G2 motif stretch occupies residues 93-95 (VTR). The G3 motif stretch occupies residues 169-172 (DLPG). GTP is bound by residues 169-173 (DLPGI) and 238-241 (TKPD). Positions 238–241 (TKPD) are G4 motif. The interval 270–273 (KCRG) is G5 motif. The segment at 332 to 357 (ILENQINVNHQIASEELQKYGADIPE) is bundle signaling element (BSE). Positions 357-526 (EDDSKRLSFL…HFQMEHIVYC (170 aa)) are middle domain. The interval 358–622 (DDSKRLSFLM…TSKCNWFLTE (265 aa)) is stalk. Residues 564 to 652 (TTEMTQHLNA…AQRKLAKFSN (89 aa)) enclose the GED domain.

Belongs to the TRAFAC class dynamin-like GTPase superfamily. Dynamin/Fzo/YdjA family. In terms of assembly, homooligomer. Oligomerizes into multimeric filamentous or ring-like structures by virtue of its stalk domain. Oligomerization is critical for GTPase activity, protein stability, and recognition of viral target structures. Interacts with TRPC1, TRPC3, TRPC4, TRPC5, TRPC6 and TRPC7. Interacts with HSPA5. Interacts with TUBB/TUBB5. Interacts with DDX39A and DDX39B. Post-translationally, ISGylated.

Its subcellular location is the nucleus. The protein resides in the cytoplasm. It is found in the endoplasmic reticulum membrane. The protein localises to the perinuclear region. Interferon-induced dynamin-like GTPase which has antiviral activity against influenza A virus, (IAV) and Thogoto virus (THOV). Inhibits IAV by interfering with the process of primary transcription, probably by affecting the viral polymerase function. The chain is Interferon-induced GTP-binding protein Mx1 (Mx1) from Rattus norvegicus (Rat).